Reading from the N-terminus, the 119-residue chain is Holo-[acyl-carrier-protein] synthase (119 aa).

Asp8 and Glu58 together coordinate Mg(2+).

This sequence belongs to the P-Pant transferase superfamily. AcpS family. Mg(2+) serves as cofactor.

The protein resides in the cytoplasm. It carries out the reaction apo-[ACP] + CoA = holo-[ACP] + adenosine 3',5'-bisphosphate + H(+). In terms of biological role, transfers the 4'-phosphopantetheine moiety from coenzyme A to a Ser of acyl-carrier-protein. This chain is Holo-[acyl-carrier-protein] synthase, found in Bacillus mycoides (strain KBAB4) (Bacillus weihenstephanensis).